A 376-amino-acid chain; its full sequence is Glutamate 5-kinase (376 aa).

K18 contacts ATP. 3 residues coordinate substrate: S58, D145, and N157. Residues 177-178 (SD) and 218-224 (TGGMASK) contribute to the ATP site. The PUA domain maps to 280-358 (TGALTLDAGA…SELPGELRRP (79 aa)).

It belongs to the glutamate 5-kinase family.

The protein resides in the cytoplasm. The enzyme catalyses L-glutamate + ATP = L-glutamyl 5-phosphate + ADP. Its pathway is amino-acid biosynthesis; L-proline biosynthesis; L-glutamate 5-semialdehyde from L-glutamate: step 1/2. Functionally, catalyzes the transfer of a phosphate group to glutamate to form L-glutamate 5-phosphate. The sequence is that of Glutamate 5-kinase from Mycobacterium tuberculosis (strain CDC 1551 / Oshkosh).